An 877-amino-acid chain; its full sequence is Telomere length regulation protein clk-2 (877 aa).

The span at 488-501 (NKDSAAITSKNNLR) shows a compositional bias: polar residues. The disordered stretch occupies residues 488 to 509 (NKDSAAITSKNNLRLDSDDDED).

Belongs to the TEL2 family.

The protein resides in the nucleus. It localises to the chromosome. Its subcellular location is the telomere. In terms of biological role, DNA damage checkpoint protein required for DNA damage-induced cell cycle arrest and apoptosis, thereby playing a role in genome stability. Regulator of telomere length. This chain is Telomere length regulation protein clk-2 (clk-2), found in Caenorhabditis elegans.